A 1995-amino-acid polypeptide reads, in one-letter code: Myosin-14 (1995 aa).

The segment at 1 to 46 is disordered; that stretch reads MAAVTMSVPGRKAPPRPGPVPEAAQPFLFTPRGPSAGGGPGSGTSP. An N-acetylalanine modification is found at Ala-2. Residues 51-101 form the Myosin N-terminal SH3-like domain; sequence TARRLVWVPSELHGFEAAALRDEGEEEAEVELAESGRRLRLPRDQIQRMNP. A Phosphoserine modification is found at Ser-60. In terms of domain architecture, Myosin motor spans 105–800; it reads SKAEDMAELT…VLAQLEEERD (696 aa). ATP is bound at residue 198-205; the sequence is GESGAGKT. The tract at residues 678–700 is actin-binding; that stretch reads LSRLMATLSNTNPSFVRCIVPNH. Residues 803 to 832 form the IQ domain; that stretch reads VTDIIVSFQAAARGYLARRAFQKRQQQQSA. Residues 862 to 1947 are a coiled coil; the sequence is LQVTRQDEVL…VTTLRNRLRR (1086 aa). Thr-1194 is modified (phosphothreonine). 4 disordered regions span residues 1371–1415, 1592–1623, 1905–1942, and 1958–1995; these read EEAA…RRAA, QHER…VERD, EAEE…TTLR, and RQVF…AHPQ. The span at 1930 to 1942 shows a compositional bias: polar residues; sequence SAESMNREVTTLR. Ser-1969, Ser-1980, Ser-1983, and Ser-1989 each carry phosphoserine. Positions 1981-1995 are enriched in pro residues; it reads GPSPEPEGSPPAHPQ.

Belongs to the TRAFAC class myosin-kinesin ATPase superfamily. Myosin family. Myosin is a hexameric protein that consists of 2 heavy chain subunits (MHC), 2 alkali light chain subunits (MLC) and 2 regulatory light chain subunits (MLC-2). High levels of expression are found in brain (highest in corpus callosum), heart, kidney, liver, lung, small intestine, colon and skeletal muscle. Expression is low in organs composed mainly of smooth muscle, such as aorta, uterus and urinary bladder. No detectable expression is found in thymus, spleen, placenta and lymphocytes.

Cellular myosin that appears to play a role in cytokinesis, cell shape, and specialized functions such as secretion and capping. The polypeptide is Myosin-14 (MYH14) (Homo sapiens (Human)).